A 168-amino-acid chain; its full sequence is Segregation and condensation protein B (168 aa).

The protein belongs to the ScpB family. Homodimer. Homodimerization may be required to stabilize the binding of ScpA to the Smc head domains. Component of a cohesin-like complex composed of ScpA, ScpB and the Smc homodimer, in which ScpA and ScpB bind to the head domain of Smc. The presence of the three proteins is required for the association of the complex with DNA.

It is found in the cytoplasm. Functionally, participates in chromosomal partition during cell division. May act via the formation of a condensin-like complex containing Smc and ScpA that pull DNA away from mid-cell into both cell halves. This is Segregation and condensation protein B from Caldanaerobacter subterraneus subsp. tengcongensis (strain DSM 15242 / JCM 11007 / NBRC 100824 / MB4) (Thermoanaerobacter tengcongensis).